Consider the following 156-residue polypeptide: MQLYTYFFTFSLVLILALADQENKSLDFTQEGGIAKRGAFQFSYLIKKYTGRNPLDYWGYGCWCGLGGKGTPVDGVDWCCYHHDMCFNSITQGPRPTCSKNAPYHKNYYFSGLKCSTGWLTSKCGRAICACDIAAVKCFMRNHFNNKYQNYKKNIC.

An N-terminal signal peptide occupies residues 1–19 (MQLYTYFFTFSLVLILALA). Residues 20-35 (DQENKSLDFTQEGGIA) constitute a propeptide that is removed on maturation. 5 cysteine pairs are disulfide-bonded: cysteine 62/cysteine 156, cysteine 64/cysteine 80, cysteine 79/cysteine 138, cysteine 86/cysteine 131, and cysteine 115/cysteine 129. Residues glycine 65 and glycine 67 each coordinate Ca(2+). Histidine 83 is a catalytic residue. A Ca(2+)-binding site is contributed by aspartate 84. Aspartate 132 is a catalytic residue.

This sequence belongs to the phospholipase A2 family. It depends on Ca(2+) as a cofactor.

It localises to the secreted. The protein localises to the nematocyst. The catalysed reaction is a 1,2-diacyl-sn-glycero-3-phosphocholine + H2O = a 1-acyl-sn-glycero-3-phosphocholine + a fatty acid + H(+). Sea anemone phospholipase A2 (PLA2) that may have a role both in defense and in digestion, since its expression and enzymatic activity were found both in the acontia (defensive organs) and tentacles. PLA2 catalyzes the calcium-dependent hydrolysis of the 2-acyl groups in 3-sn-phosphoglycerides. This chain is Phospholipase A2 A2-hormotoxin-Apt1a, found in Adamsia palliata (Cloak anemone).